A 149-amino-acid polypeptide reads, in one-letter code: Transcriptional repressor NrdR (149 aa).

A zinc finger lies at 3–34 (CPFCTAVDTKVIDSRLVGDGSQVRRRRQCLVC). Residues 49-139 (PRVVKSDEIR…VYRSFEDVRD (91 aa)) enclose the ATP-cone domain.

Belongs to the NrdR family. It depends on Zn(2+) as a cofactor.

Functionally, negatively regulates transcription of bacterial ribonucleotide reductase nrd genes and operons by binding to NrdR-boxes. The polypeptide is Transcriptional repressor NrdR (Proteus mirabilis (strain HI4320)).